The primary structure comprises 687 residues: Fatty acid oxidation complex subunit alpha (687 aa).

The tract at residues 1 to 191 (MKNTSAFAWT…KLGVVDASVP (191 aa)) is enoyl-CoA hydratase. The interval 307–687 (KSIDYVGVLG…ADKYGDRFIE (381 aa)) is 3-hydroxyacyl-CoA dehydrogenase.

This sequence in the N-terminal section; belongs to the enoyl-CoA hydratase/isomerase family. It in the central section; belongs to the 3-hydroxyacyl-CoA dehydrogenase family. In terms of assembly, heterotetramer of two alpha chains (FadJ) and two beta chains (FadI).

Its subcellular location is the cytoplasm. The catalysed reaction is a (3S)-3-hydroxyacyl-CoA = a (2E)-enoyl-CoA + H2O. It carries out the reaction a 4-saturated-(3S)-3-hydroxyacyl-CoA = a (3E)-enoyl-CoA + H2O. The enzyme catalyses a (3S)-3-hydroxyacyl-CoA + NAD(+) = a 3-oxoacyl-CoA + NADH + H(+). It catalyses the reaction (3S)-3-hydroxybutanoyl-CoA = (3R)-3-hydroxybutanoyl-CoA. It functions in the pathway lipid metabolism; fatty acid beta-oxidation. Its function is as follows. Catalyzes the formation of a hydroxyacyl-CoA by addition of water on enoyl-CoA. Also exhibits 3-hydroxyacyl-CoA epimerase and 3-hydroxyacyl-CoA dehydrogenase activities. This Aliivibrio fischeri (strain ATCC 700601 / ES114) (Vibrio fischeri) protein is Fatty acid oxidation complex subunit alpha.